A 619-amino-acid polypeptide reads, in one-letter code: Dihydroxy-acid dehydratase (619 aa).

Residue Asp-81 coordinates Mg(2+). A [2Fe-2S] cluster-binding site is contributed by Cys-122. 2 residues coordinate Mg(2+): Asp-123 and Lys-124. Lys-124 is subject to N6-carboxylysine. Residue Cys-201 coordinates [2Fe-2S] cluster. Glu-496 lines the Mg(2+) pocket. Residue Ser-522 is the Proton acceptor of the active site.

It belongs to the IlvD/Edd family. Homodimer. The cofactor is [2Fe-2S] cluster. Mg(2+) serves as cofactor.

It catalyses the reaction (2R)-2,3-dihydroxy-3-methylbutanoate = 3-methyl-2-oxobutanoate + H2O. The enzyme catalyses (2R,3R)-2,3-dihydroxy-3-methylpentanoate = (S)-3-methyl-2-oxopentanoate + H2O. It participates in amino-acid biosynthesis; L-isoleucine biosynthesis; L-isoleucine from 2-oxobutanoate: step 3/4. It functions in the pathway amino-acid biosynthesis; L-valine biosynthesis; L-valine from pyruvate: step 3/4. Functions in the biosynthesis of branched-chain amino acids. Catalyzes the dehydration of (2R,3R)-2,3-dihydroxy-3-methylpentanoate (2,3-dihydroxy-3-methylvalerate) into 2-oxo-3-methylpentanoate (2-oxo-3-methylvalerate) and of (2R)-2,3-dihydroxy-3-methylbutanoate (2,3-dihydroxyisovalerate) into 2-oxo-3-methylbutanoate (2-oxoisovalerate), the penultimate precursor to L-isoleucine and L-valine, respectively. This is Dihydroxy-acid dehydratase from Burkholderia vietnamiensis (strain G4 / LMG 22486) (Burkholderia cepacia (strain R1808)).